The primary structure comprises 279 residues: Proteasome subunit beta (279 aa).

Positions 1–53 (MSGTAEFPGRIPAPYLEVGSSSFVELLGSVAPELLPGRRPLPPGDMGDAAPHG) are cleaved as a propeptide — removed in mature form; by autocatalysis. Residue Thr54 is the Nucleophile of the active site.

The protein belongs to the peptidase T1B family. The 20S proteasome core is composed of 14 alpha and 14 beta subunits that assemble into four stacked heptameric rings, resulting in a barrel-shaped structure. The two inner rings, each composed of seven catalytic beta subunits, are sandwiched by two outer rings, each composed of seven alpha subunits. The catalytic chamber with the active sites is on the inside of the barrel. Has a gated structure, the ends of the cylinder being occluded by the N-termini of the alpha-subunits. Is capped by the proteasome-associated ATPase, ARC.

The protein localises to the cytoplasm. The catalysed reaction is Cleavage of peptide bonds with very broad specificity.. Its pathway is protein degradation; proteasomal Pup-dependent pathway. With respect to regulation, the formation of the proteasomal ATPase ARC-20S proteasome complex, likely via the docking of the C-termini of ARC into the intersubunit pockets in the alpha-rings, may trigger opening of the gate for substrate entry. Interconversion between the open-gate and close-gate conformations leads to a dynamic regulation of the 20S proteasome proteolysis activity. Its function is as follows. Component of the proteasome core, a large protease complex with broad specificity involved in protein degradation. This is Proteasome subunit beta from Stackebrandtia nassauensis (strain DSM 44728 / CIP 108903 / NRRL B-16338 / NBRC 102104 / LLR-40K-21).